Reading from the N-terminus, the 455-residue chain is Bifunctional protein GlmU (455 aa).

The segment at 1–226 (MIAVAILAAG…YQEILGINDR (226 aa)) is pyrophosphorylase. UDP-N-acetyl-alpha-D-glucosamine-binding positions include 7–10 (LAAG), Lys21, Gln73, and 78–79 (GT). Residue Asp103 participates in Mg(2+) binding. The UDP-N-acetyl-alpha-D-glucosamine site is built by Gly140, Glu155, Asn170, and Asn224. Asn224 is a Mg(2+) binding site. The segment at 227–247 (KQLATAYKILQDRIKDDWLVA) is linker. The tract at residues 248–455 (GVTIMDPDSI…RPISSKQTEK (208 aa)) is N-acetyltransferase. UDP-N-acetyl-alpha-D-glucosamine contacts are provided by Arg329 and Lys347. The Proton acceptor role is filled by His359. The UDP-N-acetyl-alpha-D-glucosamine site is built by Tyr362 and Asn373. Residues Ala376, 382–383 (NY), Ala419, and Arg436 contribute to the acetyl-CoA site.

In the N-terminal section; belongs to the N-acetylglucosamine-1-phosphate uridyltransferase family. This sequence in the C-terminal section; belongs to the transferase hexapeptide repeat family. In terms of assembly, homotrimer. Requires Mg(2+) as cofactor.

Its subcellular location is the cytoplasm. It carries out the reaction alpha-D-glucosamine 1-phosphate + acetyl-CoA = N-acetyl-alpha-D-glucosamine 1-phosphate + CoA + H(+). The catalysed reaction is N-acetyl-alpha-D-glucosamine 1-phosphate + UTP + H(+) = UDP-N-acetyl-alpha-D-glucosamine + diphosphate. It functions in the pathway nucleotide-sugar biosynthesis; UDP-N-acetyl-alpha-D-glucosamine biosynthesis; N-acetyl-alpha-D-glucosamine 1-phosphate from alpha-D-glucosamine 6-phosphate (route II): step 2/2. Its pathway is nucleotide-sugar biosynthesis; UDP-N-acetyl-alpha-D-glucosamine biosynthesis; UDP-N-acetyl-alpha-D-glucosamine from N-acetyl-alpha-D-glucosamine 1-phosphate: step 1/1. The protein operates within bacterial outer membrane biogenesis; LPS lipid A biosynthesis. Catalyzes the last two sequential reactions in the de novo biosynthetic pathway for UDP-N-acetylglucosamine (UDP-GlcNAc). The C-terminal domain catalyzes the transfer of acetyl group from acetyl coenzyme A to glucosamine-1-phosphate (GlcN-1-P) to produce N-acetylglucosamine-1-phosphate (GlcNAc-1-P), which is converted into UDP-GlcNAc by the transfer of uridine 5-monophosphate (from uridine 5-triphosphate), a reaction catalyzed by the N-terminal domain. In Acaryochloris marina (strain MBIC 11017), this protein is Bifunctional protein GlmU.